The following is a 542-amino-acid chain: MPAKEIKYDMQAREKIMKGVDTLANAVKVTLGPKGRNVAIAKSWGAPQVTKDGVTVAKEIELEDKFENMGAQMVKEVASKTSDKAGDGTTTATVLAQAIYREGSKLVVSGMNPMSLKRGIDKGVALVVDELKKRSKTISDKKEIAQIGTISANNDATIGNIISEAMEKVGKDGVITVEEAKGMETELEIVEGMQFDRGYVSPYFVTDAEKMEVRLDDPYILLHEKKISAMKDMVPLLEQIAKTGKPLLLVAEDIEGEALATLVVNKMRGTLKCVAVKAPGFGDRRKAMLQDIAVLTGGNLISEDVGIKLENVTLQDLGTCKKVTVDKDNTTIVDGAGNRADIEGRVKQIRAEIEETKSDYDREKLQERLAKIVGGVAVIRVGAATEIEMKEKKARVEDALHATRAAVEEGIVPGGGVAFIRSIGALADAKLPDEEQQGLNIVRRALEEPLRQIAANAGCEGSIVVEKVKESNGTHGFDAETEQYVDMLKAGIIDPTKVARFALQNAASVASLLLTTEAMIAEKPKKKEPPMPAMPSDMGDYD.

Residues 30–33 (TLGP), Lys51, 87–91 (DGTTT), Gly415, and Asp494 contribute to the ATP site. The segment at 523 to 542 (KPKKKEPPMPAMPSDMGDYD) is disordered.

This sequence belongs to the chaperonin (HSP60) family. In terms of assembly, forms a cylinder of 14 subunits composed of two heptameric rings stacked back-to-back. Interacts with the co-chaperonin GroES.

The protein resides in the cytoplasm. The enzyme catalyses ATP + H2O + a folded polypeptide = ADP + phosphate + an unfolded polypeptide.. Together with its co-chaperonin GroES, plays an essential role in assisting protein folding. The GroEL-GroES system forms a nano-cage that allows encapsulation of the non-native substrate proteins and provides a physical environment optimized to promote and accelerate protein folding. In Syntrophus aciditrophicus (strain SB), this protein is Chaperonin GroEL 3.